Consider the following 932-residue polypeptide: Progesterone receptor (932 aa).

The tract at residues 1–164 (MTELKAKGPR…PATQGVLSPL (164 aa)) is AF3; mediates transcriptional activation. A disordered region spans residues 1–254 (MTELKAKGPR…GGAAAGGAAA (254 aa)). The segment at 1–565 (MTELKAKGPR…YSFESLPQKI (565 aa)) is modulating, Pro-Rich. Residue S20 is modified to Phosphoserine. The LXXL motif 1 signature appears at 55 to 59 (LDGLL). The residue at position 81 (S81) is a Phosphoserine. The segment covering 88–103 (SRAEATRGAGGSSSSP) has biased composition (low complexity). Positions 115–119 (LDTLL) match the LXXL motif 2 motif. Phosphoserine is present on residues S130 and S162. The interval 165 to 304 (MSRSGGKAGD…LATTVMDFIH (140 aa)) is mediates transcriptional transrepression. A Nuclear localization signal motif is present at residues 183–187 (KVLPQ). S190 and S213 each carry phosphoserine. Over residues 220-231 (EVEEEDGSESED) the composition is skewed to acidic residues. Positions 232–254 (SAGPLLKGKPRALGGAAAGGAAA) are enriched in low complexity. S293 is modified (phosphoserine; by MAPK1). The span at 334–349 (AASAFAPPRSSPSASS) shows a compositional bias: low complexity. The segment at 334-356 (AASAFAPPRSSPSASSTPVAVGD) is disordered. Position 344 is a phosphoserine; by MAPK (S344). Residue K387 forms a Glycyl lysine isopeptide (Lys-Gly) (interchain with G-Cter in SUMO); alternate linkage. K387 is covalently cross-linked (Glycyl lysine isopeptide (Lys-Gly) (interchain with G-Cter in ubiquitin); alternate). 2 disordered regions span residues 414 to 451 (PDFP…SSAS) and 468 to 499 (PPQQ…STAA). Pro residues predominate over residues 417-432 (PLGPPPPLPPRAPPSR). The segment covering 433–451 (PGEAAVTAAPASASVSSAS) has biased composition (low complexity). Positions 455–545 (STLECILYKA…VYPPYLNYLR (91 aa)) are AF1; mediates transcriptional activation. A compositionally biased stretch (pro residues) spans 470–480 (QQGPFAPPPSK). A Glycyl lysine isopeptide (Lys-Gly) (interchain with G-Cter in SUMO) cross-link involves residue K530. 2 NR C4-type zinc fingers span residues 566 to 586 (CLIC…CGSC) and 602 to 626 (CAGR…LRKC). The segment at residues 566-638 (CLICGDEASG…AGMVLGGRKF (73 aa)) is a DNA-binding region (nuclear receptor). S675 is modified (phosphoserine). The 235-residue stretch at 678 to 912 (QDIQLIPPLI…EFPEMMSEVI (235 aa)) folds into the NR LBD domain. Residues 686–932 (LINLLMSIEP…MVKPLLFHKK (247 aa)) form an AF2; mediates transcriptional activation region. R765 contacts progesterone.

This sequence belongs to the nuclear hormone receptor family. In terms of assembly, interacts with SMARD1 and UNC45A. Interacts with CUEDC2; the interaction promotes ubiquitination, decreases sumoylation, and represses transcriptional activity. Interacts with PIAS3; the interaction promotes sumoylation of PR in a hormone-dependent manner, inhibits DNA-binding, and alters nuclear export. Interacts with SP1; the interaction requires ligand-induced phosphorylation on Ser-344 by ERK1/2-MAPK. Interacts with PRMT2. Interacts with NCOA2 and NCOA1. Interacts with KLF9. Interacts with GTF2B. In terms of processing, phosphorylated on multiple serine sites. Several of these sites are hormone-dependent. Phosphorylation on Ser-293 is highly hormone-dependent and modulates ubiquitination and sumoylation on Lys-387. Phosphorylation on Ser-102 and Ser-344 also requires induction by hormone. Basal phosphorylation on Ser-81, Ser-162 and Ser-190 is increased in response to progesterone and can be phosphorylated in vitro by the CDK2-A1 complex. Phosphorylation at Ser-162 and Ser-293, but not at Ser-190, is impaired during the G(2)/M phase of the cell cycle. Phosphorylation on Ser-344 by ERK1/2 MAPK is required for interaction with SP1. Post-translationally, sumoylation is hormone-dependent and represses transcriptional activity. Sumoylation on all three sites is enhanced by PIAS3. Desumoylated by SENP1. Sumoylation on Lys-387, the main site of sumoylation, is repressed by ubiquitination on the same site, and modulated by phosphorylation at Ser-293. Ubiquitination is hormone-dependent and represses sumoylation on the same site. Promoted by MAPK-mediated phosphorylation on Ser-293. Ubiquitinated by UBR5, leading to its degradation: UBR5 specifically recognizes and binds ligand-bound PGR when it is not associated with coactivators (NCOAs). In presence of NCOAs, the UBR5-degron is not accessible, preventing its ubiquitination and degradation. In terms of processing, palmitoylated by ZDHHC7 and ZDHHC21. Palmitoylation is required for plasma membrane targeting and for rapid intracellular signaling via ERK and AKT kinases and cAMP generation.

Its subcellular location is the nucleus. The protein localises to the cytoplasm. Functionally, the steroid hormones and their receptors are involved in the regulation of eukaryotic gene expression and affect cellular proliferation and differentiation in target tissues. Transcriptional activator of several progesteron-dependent promoters in a variety of cell types. Involved in activation of SRC-dependent MAPK signaling on hormone stimulation. In Hylobates lar (Lar gibbon), this protein is Progesterone receptor (PGR).